The sequence spans 135 residues: Snaclec rhodocetin subunit gamma (135 aa).

Cystine bridges form between Cys4–Cys15, Cys32–Cys129, and Cys104–Cys121. Positions 11–130 (YDQHCYQAFN…CQAKNPFVCK (120 aa)) constitute a C-type lectin domain.

This sequence belongs to the snaclec family. As to quaternary structure, heterotetramer of subunit alpha, beta, gamma and delta; only the gamma and the delta subunits are disulfide-linked. Alpha-beta heterodimer and gamma-delta heterodimer associate orthogonally, giving a cruciform conformation. This heterotetramer may covalently dimerizes thanks to the gamma subunit. In terms of tissue distribution, expressed by the venom gland.

The protein localises to the secreted. Functionally, potent inhibitor of collagen-induced platelet aggregation. It acts by binding to the integrin alpha2A domain and blocks collagen binding to integrin alpha-2/beta-1 (ITGA2/ITGB1). The gamma/delta subunits mainly contribute to this activity. The protein is Snaclec rhodocetin subunit gamma of Calloselasma rhodostoma (Malayan pit viper).